The primary structure comprises 435 residues: F-box/FBD/LRR-repeat protein At1g51370 (435 aa).

Residues glutamate 18 to aspartate 64 enclose the F-box domain. LRR repeat units lie at residues valine 123 to tryptophan 148, valine 170 to serine 195, alanine 234 to asparagine 259, glycine 262 to serine 287, and arginine 314 to methionine 340. An FBD domain is found at glutamate 354–valine 406.

This chain is F-box/FBD/LRR-repeat protein At1g51370, found in Arabidopsis thaliana (Mouse-ear cress).